The chain runs to 301 residues: 4-hydroxy-tetrahydrodipicolinate synthase (301 aa).

Thr46 contributes to the pyruvate binding site. Tyr134 serves as the catalytic Proton donor/acceptor. Lys162 functions as the Schiff-base intermediate with substrate in the catalytic mechanism. Ile203 is a pyruvate binding site.

The protein belongs to the DapA family. Homotetramer; dimer of dimers.

It localises to the cytoplasm. The enzyme catalyses L-aspartate 4-semialdehyde + pyruvate = (2S,4S)-4-hydroxy-2,3,4,5-tetrahydrodipicolinate + H2O + H(+). Its pathway is amino-acid biosynthesis; L-lysine biosynthesis via DAP pathway; (S)-tetrahydrodipicolinate from L-aspartate: step 3/4. Catalyzes the condensation of (S)-aspartate-beta-semialdehyde [(S)-ASA] and pyruvate to 4-hydroxy-tetrahydrodipicolinate (HTPA). The protein is 4-hydroxy-tetrahydrodipicolinate synthase of Anaplasma marginale (strain St. Maries).